A 200-amino-acid chain; its full sequence is Large ribosomal subunit protein uL4 (200 aa).

The interval 42 to 65 (TRAQKTRSEVSGGGAKPWRQKGTG) is disordered.

Belongs to the universal ribosomal protein uL4 family. As to quaternary structure, part of the 50S ribosomal subunit.

Functionally, one of the primary rRNA binding proteins, this protein initially binds near the 5'-end of the 23S rRNA. It is important during the early stages of 50S assembly. It makes multiple contacts with different domains of the 23S rRNA in the assembled 50S subunit and ribosome. In terms of biological role, forms part of the polypeptide exit tunnel. The chain is Large ribosomal subunit protein uL4 from Aliivibrio fischeri (strain MJ11) (Vibrio fischeri).